The primary structure comprises 128 residues: Probable prefoldin subunit 6 (128 aa).

This sequence belongs to the prefoldin subunit beta family. As to quaternary structure, heterohexamer of two PFD-alpha type and four PFD-beta type subunits.

It localises to the cytoplasm. Its function is as follows. Binds specifically to cytosolic chaperonin (c-CPN) and transfers target proteins to it. Binds to nascent polypeptide chain and promotes folding in an environment in which there are many competing pathways for nonnative proteins. Required for positioning of the mitotic spindle. This Caenorhabditis briggsae protein is Probable prefoldin subunit 6.